The sequence spans 319 residues: ATP-dependent 6-phosphofructokinase 1 (319 aa).

Residue Gly11 coordinates ATP. 21 to 25 (RAVTR) is a binding site for ADP. Residues 72–73 (RC) and 102–105 (GDGS) contribute to the ATP site. Asp103 serves as a coordination point for Mg(2+). 125-127 (TID) is a binding site for substrate. The Proton acceptor role is filled by Asp127. Arg154 is an ADP binding site. Residues Arg162 and 169 to 171 (MGR) contribute to the substrate site. ADP is bound by residues 185 to 187 (GAE) and 213 to 215 (KTH). Residues Glu222, Arg243, and 249-252 (HIQR) contribute to the substrate site.

This sequence belongs to the phosphofructokinase type A (PFKA) family. ATP-dependent PFK group I subfamily. Prokaryotic clade 'B1' sub-subfamily. As to quaternary structure, homotetramer. Mg(2+) is required as a cofactor.

The protein resides in the cytoplasm. It catalyses the reaction beta-D-fructose 6-phosphate + ATP = beta-D-fructose 1,6-bisphosphate + ADP + H(+). It functions in the pathway carbohydrate degradation; glycolysis; D-glyceraldehyde 3-phosphate and glycerone phosphate from D-glucose: step 3/4. Allosterically activated by ADP and other diphosphonucleosides, and allosterically inhibited by phosphoenolpyruvate. In terms of biological role, catalyzes the phosphorylation of D-fructose 6-phosphate to fructose 1,6-bisphosphate by ATP, the first committing step of glycolysis. The protein is ATP-dependent 6-phosphofructokinase 1 of Clostridium perfringens (strain 13 / Type A).